A 123-amino-acid chain; its full sequence is Methicillin resistance regulatory protein MecI (123 aa).

A DNA-binding region (H-T-H motif) is located at residues 7–71 (EISSAEWEVM…KDNKIFQYYS (65 aa)). The segment at 74–123 (EESDIKYKTSKNFINKVYKGGFNSLVLNFVEKEDLSQDEIEELRNILNKK) is important for dimerization.

It belongs to the BlaI transcriptional regulatory family. As to quaternary structure, monomer and homodimer. Upon exposure to beta-lactams, proteolytic cleavage at a single site impairs dimerization and abolishes repressor activity.

The protein localises to the cytoplasm. Functionally, transcriptional repressor that constitutively blocks the transcription of the gene for the penicillin-binding protein MecA. Binds palindromic DNA with the sequence 5'-TACA-[AT]-N-TGTA-3'. Regulates genes involved in antibiotic resistance. Binds DNA as a dimer. This Staphylococcus aureus (strain N315) protein is Methicillin resistance regulatory protein MecI (mecI).